A 127-amino-acid polypeptide reads, in one-letter code: Small ribosomal subunit protein uS12 (127 aa).

Aspartate 89 carries the post-translational modification 3-methylthioaspartic acid. The disordered stretch occupies residues 102-127; that stretch reads LDTAGVKDRKQGRSKYGTKRPKEAKK. Positions 113 to 127 are enriched in basic residues; sequence GRSKYGTKRPKEAKK.

Belongs to the universal ribosomal protein uS12 family. Part of the 30S ribosomal subunit. Contacts proteins S8 and S17. May interact with IF1 in the 30S initiation complex.

With S4 and S5 plays an important role in translational accuracy. In terms of biological role, interacts with and stabilizes bases of the 16S rRNA that are involved in tRNA selection in the A site and with the mRNA backbone. Located at the interface of the 30S and 50S subunits, it traverses the body of the 30S subunit contacting proteins on the other side and probably holding the rRNA structure together. The combined cluster of proteins S8, S12 and S17 appears to hold together the shoulder and platform of the 30S subunit. In Nostoc punctiforme (strain ATCC 29133 / PCC 73102), this protein is Small ribosomal subunit protein uS12.